The chain runs to 863 residues: DNA replication licensing factor mcm4-B (863 aa).

Positions 1–130 are disordered; that stretch reads MSSPTSTPSR…ARKVKQVDLH (130 aa). Polar residues-rich tracts occupy residues 54-64 and 84-99; these read SPSGDVQSPSG and LDLSSPLTYGTPSSRV. The C4-type zinc-finger motif lies at 306–331; sequence CQVCAFTTRVEIDRGRIAEPSVCKHC. In terms of domain architecture, MCM spans 458 to 667; sequence IYERLAAALA…YDRRLAHHLV (210 aa). ATP contacts are provided by Tyr-471, Arg-497, Lys-516, Ser-517, Asn-618, Arg-643, Arg-732, and Glu-735. An Arginine finger motif is present at residues 642–645; sequence SRFD.

This sequence belongs to the MCM family. As to quaternary structure, component of the mcm2-7 complex (RLF-M). The complex forms a toroidal hexameric ring with the proposed subunit order mcm2-mcm6-mcm4-mcm7-mcm3-mcm5. The heterodimer of mmcm3/mcm5 interacts with mcm4, mmcm6, mcm7 and weakly with mcm2. Begins to associate with zmcm6 at the neurula stage. Component of the CMG helicase complex, composed of the mcm2-7 complex, the GINS complex and cdc45. Hyperphosphorylated during mitosis in a mechanism requiring cdc2-cyclin B and other kinases. Undergoes dephosphorylation after exiting mitosis, existing in a partially phosphorylated state in the cytosolic interphase mcm complex which associates with the pre-replication complexes (pre-Rcs). Complete dephosphorylation inactivates the mcm complex, preventing its binding to chromatin. Becomes actively phosphorylated during S phase once the mcm complex is assembled on the chromatin. This chromatin-associated phosphorylation occurs during the activation of the pre-Rcs and is independent of cdks. Phosphorylated by the cdc7-dbf4b complex.

It is found in the nucleus. Its subcellular location is the chromosome. It carries out the reaction ATP + H2O = ADP + phosphate + H(+). Acts as a component of the MCM2-7 complex (MCM complex) which is the replicative helicase essential for 'once per cell cycle' DNA replication initiation and elongation in eukaryotic cells. Core component of CDC45-MCM-GINS (CMG) helicase, the molecular machine that unwinds template DNA during replication, and around which the replisome is built. The active ATPase sites in the MCM2-7 ring are formed through the interaction surfaces of two neighboring subunits such that a critical structure of a conserved arginine finger motif is provided in trans relative to the ATP-binding site of the Walker A box of the adjacent subunit. The six ATPase active sites, however, are likely to contribute differentially to the complex helicase activity. This chain is DNA replication licensing factor mcm4-B (mcm4-b), found in Xenopus laevis (African clawed frog).